The chain runs to 305 residues: MWNLRITPLSFGAACQGIFTSTLLLSALTVPLVCTIVYDSCLYMDINASRALANVYDLPDDFFPKIDDLVRDAKDALEPYWKSDSIKKHVLIATHFVDLIEDFWQTTQGMHEIAESLRAVIPPTTAPVPTGYLIQHEEAEEIPLGDLFKHQEERIVSFQPDYPITARIHAHLKAYAKINEESLDRARRLLWWHYNCLLWGEANVTNYISRLRTWLSTPEKYRGRDAPTIEAITRPIQVAQGGRKTSSGTRKPRGLEPRRRKVKTTVVYGRRRSKSRDRRAPSPQRAGSPLPRSSSSHHRSPSPRK.

An N-terminal signal peptide occupies residues 1-19 (MWNLRITPLSFGAACQGIF). The interval 226 to 305 (APTIEAITRP…SHHRSPSPRK (80 aa)) is disordered. Composition is skewed to basic residues over residues 258–277 (RRRKVKTTVVYGRRRSKSRD) and 295–305 (SSHHRSPSPRK). Positions 273–305 (SKSRDRRAPSPQRAGSPLPRSSSSHHRSPSPRK) are excised as a propeptide.

Belongs to the avihepadnavirus precore antigen family. In terms of assembly, homodimerizes.

The protein resides in the secreted. In terms of biological role, may regulate immune response to the intracellular capsid in acting as a T-cell tolerogen, by having an immunoregulatory effect which prevents destruction of infected cells by cytotoxic T-cells. The chain is External core antigen (C) from Anas (ducks).